Reading from the N-terminus, the 288-residue chain is 33 kDa chaperonin (288 aa).

Cystine bridges form between C236–C238 and C269–C272.

This sequence belongs to the HSP33 family. In terms of processing, under oxidizing conditions two disulfide bonds are formed involving the reactive cysteines. Under reducing conditions zinc is bound to the reactive cysteines and the protein is inactive.

It is found in the cytoplasm. Functionally, redox regulated molecular chaperone. Protects both thermally unfolding and oxidatively damaged proteins from irreversible aggregation. Plays an important role in the bacterial defense system toward oxidative stress. The protein is 33 kDa chaperonin of Lactococcus lactis subsp. lactis (strain IL1403) (Streptococcus lactis).